Here is a 229-residue protein sequence, read N- to C-terminus: Peptidase E (229 aa).

Residues Ser120, Asp135, and His157 each act as charge relay system in the active site.

Belongs to the peptidase S51 family.

The protein resides in the cytoplasm. The enzyme catalyses Dipeptidase E catalyzes the hydrolysis of dipeptides Asp-|-Xaa. It does not act on peptides with N-terminal Glu, Asn or Gln, nor does it cleave isoaspartyl peptides.. Functionally, hydrolyzes dipeptides containing N-terminal aspartate residues. May play a role in allowing the cell to use peptide aspartate to spare carbon otherwise required for the synthesis of the aspartate family of amino acids. The protein is Peptidase E of Salmonella paratyphi A (strain AKU_12601).